Reading from the N-terminus, the 398-residue chain is Exodeoxyribonuclease 7 large subunit (398 aa).

It belongs to the XseA family. As to quaternary structure, heterooligomer composed of large and small subunits.

The protein localises to the cytoplasm. The catalysed reaction is Exonucleolytic cleavage in either 5'- to 3'- or 3'- to 5'-direction to yield nucleoside 5'-phosphates.. Functionally, bidirectionally degrades single-stranded DNA into large acid-insoluble oligonucleotides, which are then degraded further into small acid-soluble oligonucleotides. The polypeptide is Exodeoxyribonuclease 7 large subunit (Salinibacter ruber (strain DSM 13855 / M31)).